The following is a 347-amino-acid chain: Isopentenyl-diphosphate delta-isomerase (347 aa).

9–10 (RK) provides a ligand contact to substrate. Residues 65–67 (AMT), serine 95, and asparagine 124 contribute to the FMN site. Residue 95-97 (STH) coordinates substrate. Glutamine 154 contributes to the substrate binding site. Glutamate 155 is a binding site for Mg(2+). FMN is bound by residues lysine 186, serine 211, threonine 216, 262–264 (GVR), and 283–284 (SR).

The protein belongs to the IPP isomerase type 2 family. As to quaternary structure, homooctamer. Dimer of tetramers. Requires FMN as cofactor. The cofactor is NADPH. It depends on Mg(2+) as a cofactor.

Its subcellular location is the cytoplasm. The catalysed reaction is isopentenyl diphosphate = dimethylallyl diphosphate. Its function is as follows. Involved in the biosynthesis of isoprenoids. Catalyzes the 1,3-allylic rearrangement of the homoallylic substrate isopentenyl (IPP) to its allylic isomer, dimethylallyl diphosphate (DMAPP). In Staphylococcus saprophyticus subsp. saprophyticus (strain ATCC 15305 / DSM 20229 / NCIMB 8711 / NCTC 7292 / S-41), this protein is Isopentenyl-diphosphate delta-isomerase.